Reading from the N-terminus, the 294-residue chain is ADP-ribosyl-[dinitrogen reductase] glycohydrolase (294 aa).

ADP-D-ribose contacts are provided by residues 100–102 (NTC), Glu121, His158, and Tyr212. Positions 243, 245, and 246 each coordinate Mn(2+).

This sequence belongs to the ADP-ribosylglycohydrolase family. Monomer. The cofactor is Mn(2+).

The protein localises to the cytoplasm. It carries out the reaction N(omega)-alpha-(ADP-D-ribosyl)-L-arginyl-[dinitrogen reductase] + H2O = L-arginyl-[dinitrogen reductase] + ADP-D-ribose. Its function is as follows. Involved in the regulation of nitrogen fixation activity by the reversible ADP-ribosylation of one subunit of the homodimeric dinitrogenase reductase component of the nitrogenase enzyme complex. The ADP-ribosyltransferase (DraT) transfers the ADP-ribose group from NAD to dinitrogenase reductase. The ADP-ribose group is removed through the action of the ADP-ribosylglycohydrolase (DraG, this entry). The chain is ADP-ribosyl-[dinitrogen reductase] glycohydrolase from Rhodospirillum rubrum.